The primary structure comprises 383 residues: Cytochrome b (383 aa).

4 consecutive transmembrane segments (helical) span residues valine 32–methionine 52, tryptophan 76–glycine 98, valine 113–cysteine 133, and phenylalanine 179–methionine 199. Positions 82 and 96 each coordinate heme b. Histidine 183 and histidine 197 together coordinate heme b. Histidine 202 provides a ligand contact to a ubiquinone. 4 helical membrane-spanning segments follow: residues phenylalanine 225–phenylalanine 245, leucine 289–aspartate 309, leucine 321–glutamine 341, and phenylalanine 348–proline 368.

It belongs to the cytochrome b family. Fungal cytochrome b-c1 complex contains 10 subunits; 3 respiratory subunits, 2 core proteins and 5 low-molecular weight proteins. Cytochrome b-c1 complex is a homodimer. Heme b serves as cofactor.

The protein resides in the mitochondrion inner membrane. In terms of biological role, component of the ubiquinol-cytochrome c reductase complex (complex III or cytochrome b-c1 complex) that is part of the mitochondrial respiratory chain. The b-c1 complex mediates electron transfer from ubiquinol to cytochrome c. Contributes to the generation of a proton gradient across the mitochondrial membrane that is then used for ATP synthesis. In Debaryomyces hansenii (strain ATCC 36239 / CBS 767 / BCRC 21394 / JCM 1990 / NBRC 0083 / IGC 2968) (Yeast), this protein is Cytochrome b (COB).